The sequence spans 432 residues: MNTHESEVYTVAPEMPAMFDGMKLAAVATVLYVIVRCLNLKSPTAPPDLTFQDTTLNHFLLKSCPILTKEYIPPLLWGKSGHLQTALYGKLGRVSSPHPFGLRKYLPMQDGATATFDLFEPLADHQSGEDVTMVICPGIGNHSEKHYIRTFVDHSQKQGYRCAVLNHLGALPNIELTSPRMFTYGCTWEFAAMVGFIKKTYPQSKLIVVGFSLGGNIVCKFLGENRTNQERVLCCVSVCQGYSALRAQETFLQWDQCRRFYNFLMADNMKKIILSHRGVLFGVGSKMVDSELSRLYTATSLMQIDDNIMRKFHGHNSLKEYYEKESCVHYIHNINVPLLLVNSVDDPLVHNSLLTIPRTLAEKKENVVFALTLHGGHLGFFEGAVLFPQPLTWMDKVIVDYATAMCQWEKQKPPCQSKDAQSNQTTCQENTS.

The Cytoplasmic portion of the chain corresponds to 1–14 (MNTHESEVYTVAPE). Residues 15–35 (MPAMFDGMKLAAVATVLYVIV) form a helical; Signal-anchor for type II membrane protein membrane-spanning segment. At 36–432 (RCLNLKSPTA…NQTTCQENTS (397 aa)) the chain is on the extracellular side. The AB hydrolase-1 domain occupies 132-383 (TMVICPGIGN…HGGHLGFFEG (252 aa)). Asn-141 carries N-linked (GlcNAc...) asparagine glycosylation. The Nucleophile role is filled by Ser-212. A glycan (N-linked (GlcNAc...) asparagine) is linked at Asn-225. Active-site charge relay system residues include Asp-346 and His-377. The tract at residues 413–432 (PPCQSKDAQSNQTTCQENTS) is disordered. Residues 418–432 (KDAQSNQTTCQENTS) show a composition bias toward polar residues. A glycan (N-linked (GlcNAc...) asparagine) is linked at Asn-423.

Belongs to the AB hydrolase superfamily. AB hydrolase 4 family.

It localises to the cell membrane. The catalysed reaction is Hydrolyzes glycerol monoesters of long-chain fatty acids.. It catalyses the reaction an acetyl ester + H2O = an aliphatic alcohol + acetate + H(+). The enzyme catalyses a triacylglycerol + H2O = a diacylglycerol + a fatty acid + H(+). It carries out the reaction 2-(5Z,8Z,11Z,14Z-eicosatetraenoyl)-glycerol + H2O = glycerol + (5Z,8Z,11Z,14Z)-eicosatetraenoate + H(+). The catalysed reaction is a butanoate ester + H2O = an aliphatic alcohol + butanoate + H(+). It catalyses the reaction hexadecanoate ester + H2O = an aliphatic alcohol + hexadecanoate + H(+). Acylglycerol lipase activity is activated upon binding to progesterone. Its function is as follows. Progesterone-dependent acylglycerol lipase that catalyzes hydrolysis of endocannabinoid arachidonoylglycerol (AG) from cell membrane. Acts as a progesterone receptor: progesterone-binding activates the acylglycerol lipase activity, mediating degradation of 1-arachidonoylglycerol (1AG) and 2-arachidonoylglycerol (2AG) to glycerol and arachidonic acid (AA). Also displays an ester hydrolase activity against acetyl ester, butanoate ester and hexadecanoate ester. Plays a key role in sperm capacitation in response to progesterone by mediating degradation of 2AG, an inhibitor of the sperm calcium channel CatSper, leading to calcium influx via CatSper and sperm activation. May also play a role in smooth muscle cells migration. The protein is Monoacylglycerol lipase ABHD2 (abhd2a) of Danio rerio (Zebrafish).